A 346-amino-acid polypeptide reads, in one-letter code: Serpentine receptor class gamma-20 (346 aa).

7 consecutive transmembrane segments (helical) span residues 27 to 47, 69 to 89, 106 to 128, 157 to 177, 212 to 232, 254 to 274, and 279 to 299; these read VMLS…SAVL, FFVL…IEVL, PFFF…CLAF, ILAP…WNIL, IPCL…LTML, TMLF…LPGI, and LLIS…ALIL.

The protein belongs to the nematode receptor-like protein srg family.

It is found in the membrane. This Caenorhabditis elegans protein is Serpentine receptor class gamma-20 (srg-20).